The primary structure comprises 853 residues: Rod cGMP-specific 3',5'-cyclic phosphodiesterase subunit beta (853 aa).

An N-acetylserine modification is found at Ser-2. GAF domains follow at residues 71–220 (NMER…TLNL) and 252–429 (DIER…GWSV). One can recognise a PDEase domain in the interval 481–814 (EEDELGKILK…KEWKALADEY (334 aa)). His-557 functions as the Proton donor in the catalytic mechanism. The a divalent metal cation site is built by His-561, His-597, Asp-598, and Asp-718. A Cysteine methyl ester modification is found at Cys-850. Residue Cys-850 is the site of S-geranylgeranyl cysteine attachment. Residues 851–853 (RIL) constitute a propeptide, removed in mature form.

Belongs to the cyclic nucleotide phosphodiesterase family. As to quaternary structure, oligomer composed of two catalytic chains (alpha and beta), an inhibitory chain (gamma) and the delta chain. Requires a divalent metal cation as cofactor.

Its subcellular location is the membrane. The protein resides in the cell projection. It is found in the cilium. The protein localises to the photoreceptor outer segment. The catalysed reaction is 3',5'-cyclic GMP + H2O = GMP + H(+). In terms of biological role, necessary for the formation of a functional phosphodiesterase holoenzyme. Involved in retinal circadian rhythm photoentrainment via modulation of UVA and orange light-induced phase-shift of the retina clock. May participate in processes of transmission and amplification of the visual signal. Its function is as follows. Rod-specific cGMP phosphodiesterase that catalyzes the hydrolysis of 3',5'-cyclic GMP. Necessary for the formation of a functional phosphodiesterase holoenzyme. Involved in retinal circadian rhythm photoentrainment via modulation of UVA and orange light-induced phase-shift of the retina clock. May participate in processes of transmission and amplification of the visual signal. The polypeptide is Rod cGMP-specific 3',5'-cyclic phosphodiesterase subunit beta (PDE6B) (Bos taurus (Bovine)).